Reading from the N-terminus, the 75-residue chain is MLIPYDALEVDTLTRLIEDFVTRDGTDNGDDTPLETRVLRVRQALTKGQALIVFDPDSEQCQLMLKHDVPKHLFD.

It belongs to the UPF0270 family.

The sequence is that of UPF0270 protein PFLU_4323 from Pseudomonas fluorescens (strain SBW25).